Here is a 359-residue protein sequence, read N- to C-terminus: Small ribosomal subunit protein uS2 (359 aa).

Positions 232–295 are disordered; that stretch reads EPQFKPSEFT…PVGTEPVATT (64 aa). Composition is skewed to basic and acidic residues over residues 239-250 and 257-273; these read EFTRRDGDENRN and DNRR…DTHY.

Belongs to the universal ribosomal protein uS2 family.

This Spiroplasma citri protein is Small ribosomal subunit protein uS2 (rpsB).